A 2656-amino-acid polypeptide reads, in one-letter code: 1-phosphatidylinositol 3-phosphate 5-kinase (2656 aa).

Positions 24-159 (FGTDDSQKDF…NSTNNDTSSN (136 aa)) are disordered. 2 stretches are compositionally biased toward low complexity: residues 59 to 107 (NNNN…NNNN) and 124 to 159 (SNTT…TSSN). The FYVE-type zinc finger occupies 198-255 (DHSSAVCYECSEEFTTFKRRHHCRLCGQIFCWKCSQKTLTDGKGERVRVCNFCYRRYM). The Zn(2+) site is built by cysteine 204, cysteine 207, cysteine 220, cysteine 223, cysteine 228, cysteine 231, cysteine 247, and cysteine 250. A compositionally biased stretch (polar residues) spans 304-331 (NVSLGNSGDNSSFVQSPNNNFSQSPTFS). Disordered stretches follow at residues 304 to 383 (NVSL…NNQQ), 465 to 495 (DHHQ…SPIV), 517 to 570 (DNLD…SSSS), 618 to 657 (NNND…NTSF), 670 to 823 (TIGR…QQQP), 1115 to 1150 (SNSI…NNST), 1633 to 1659 (RSKR…QILI), 1710 to 1844 (VNNN…SSTP), 2031 to 2127 (QQQQ…SISP), 2179 to 2208 (NQQQ…SIIE), 2246 to 2304 (QQGD…SSNS), and 2617 to 2656 (NNNN…QINK). The span at 332–355 (QQQQQQQQQQQQQQQQQQQQQQQQ) shows a compositional bias: low complexity. Composition is skewed to polar residues over residues 356–371 (TTGV…NSTL), 473–489 (SNSH…TPSG), and 542–557 (SHSS…TVST). Low complexity-rich tracts occupy residues 558–570 (GESN…SSSS), 618–637 (NNND…NNNN), 674–730 (NNNN…NLPN), 743–757 (QQQQ…QPQP), and 811–823 (PSSS…QQQP). Composition is skewed to low complexity over residues 1639–1656 (QQQQ…PQPQ) and 1710–1746 (VNNN…NNNN). 2 coiled-coil regions span residues 1741–1823 (NNNN…NNNN) and 2019–2061 (KRIS…QQEQ). A compositionally biased stretch (basic and acidic residues) spans 1750–1798 (NKSENENENKNENKNENENENENKNENKNENENENKKENENQLEIKNEN). Low complexity-rich tracts occupy residues 1807 to 1833 (NNNN…IDNN), 2031 to 2061 (QQQQ…QQEQ), 2078 to 2107 (SPSS…SETN), and 2118 to 2127 (LSGSPISISP). A compositionally biased stretch (basic and acidic residues) spans 2193-2202 (IDEKDDRNTE). Composition is skewed to low complexity over residues 2252–2283 (NNNN…NNNN) and 2618–2647 (NNNN…GNIN). One can recognise a PIPK domain in the interval 2275-2596 (NNNNTNNNNE…RFRDAMWLYF (322 aa)).

It is found in the endosome membrane. The protein localises to the early endosome membrane. The protein resides in the cytoplasmic vesicle. Its subcellular location is the phagosome membrane. It localises to the late endosome membrane. It catalyses the reaction a 1,2-diacyl-sn-glycero-3-phospho-(1D-myo-inositol-3-phosphate) + ATP = a 1,2-diacyl-sn-glycero-3-phospho-(1D-myo-inositol-3,5-bisphosphate) + ADP + H(+). The enzyme catalyses a 1,2-diacyl-sn-glycero-3-phospho-(1D-myo-inositol) + ATP = a 1,2-diacyl-sn-glycero-3-phospho-(1D-myo-inositol-5-phosphate) + ADP + H(+). It carries out the reaction L-seryl-[protein] + ATP = O-phospho-L-seryl-[protein] + ADP + H(+). Dual specificity kinase part of the PI(3,5)P2 regulatory complex which regulates both the synthesis and turnover of phosphatidylinositol 3,5-bisphosphate (PtdIns(3,5)P2). Catalyzes the phosphorylation of phosphatidylinositol 3-phosphate on the fifth hydroxyl of the myo-inositol ring, to form phosphatidylinositol 3,5-bisphosphate. The chain is 1-phosphatidylinositol 3-phosphate 5-kinase (pip5k3) from Dictyostelium discoideum (Social amoeba).